A 434-amino-acid polypeptide reads, in one-letter code: Angio-associated migratory cell protein (434 aa).

Positions 1–63 are disordered; the sequence is MESESESGAA…EEEEEEGNEE (63 aa). S20 bears the Phosphoserine mark. Positions 39–62 are enriched in acidic residues; it reads DPDDLAQEMEDVDFEEEEEEEGNE. 8 WD repeats span residues 89–129, 132–171, 173–212, 214–254, 258–299, 315–354, 356–395, and 398–433; these read LHSA…LLFE, GHKD…EVWS, EAGD…KTFQ, PNCP…HVLK, GHQG…GVFR, SESN…LRHQ, QHQS…LLTD, and GHTA…QRPD.

In terms of tissue distribution, expressed in metastatic melanoma, liver, skin, kidney, heart, lung, lymph node, skeletal muscle and brain, and also in A2058 melanoma cells and activated T-cells (at protein level). Expressed in blood vessels. Strongly expressed in endothelial cells, cytotrophoblasts, and poorly differentiated. colon adenocarcinoma cells found in lymphatics.

The protein resides in the cell membrane. The protein localises to the cytoplasm. In terms of biological role, plays a role in angiogenesis and cell migration. In smooth muscle cell migration, may act through the RhoA pathway. The protein is Angio-associated migratory cell protein (AAMP) of Homo sapiens (Human).